Consider the following 267-residue polypeptide: Thymidylate synthase (267 aa).

Arginine 24 lines the dUMP pocket. Histidine 54 contributes to the (6R)-5,10-methylene-5,6,7,8-tetrahydrofolate binding site. Residue arginine 129 to arginine 130 coordinates dUMP. The active-site Nucleophile is cysteine 149. Residues arginine 169 to aspartate 172, asparagine 180, and histidine 210 to tyrosine 212 contribute to the dUMP site. Aspartate 172 is a (6R)-5,10-methylene-5,6,7,8-tetrahydrofolate binding site. Alanine 266 lines the (6R)-5,10-methylene-5,6,7,8-tetrahydrofolate pocket.

Belongs to the thymidylate synthase family. Bacterial-type ThyA subfamily. Homodimer.

It localises to the cytoplasm. The catalysed reaction is dUMP + (6R)-5,10-methylene-5,6,7,8-tetrahydrofolate = 7,8-dihydrofolate + dTMP. It functions in the pathway pyrimidine metabolism; dTTP biosynthesis. Its function is as follows. Catalyzes the reductive methylation of 2'-deoxyuridine-5'-monophosphate (dUMP) to 2'-deoxythymidine-5'-monophosphate (dTMP) while utilizing 5,10-methylenetetrahydrofolate (mTHF) as the methyl donor and reductant in the reaction, yielding dihydrofolate (DHF) as a by-product. This enzymatic reaction provides an intracellular de novo source of dTMP, an essential precursor for DNA biosynthesis. This Arthrobacter sp. (strain FB24) protein is Thymidylate synthase.